Here is a 100-residue protein sequence, read N- to C-terminus: Urease subunit gamma (100 aa).

Belongs to the urease gamma subunit family. As to quaternary structure, heterotrimer of UreA (gamma), UreB (beta) and UreC (alpha) subunits. Three heterotrimers associate to form the active enzyme.

The protein localises to the cytoplasm. It carries out the reaction urea + 2 H2O + H(+) = hydrogencarbonate + 2 NH4(+). The protein operates within nitrogen metabolism; urea degradation; CO(2) and NH(3) from urea (urease route): step 1/1. This is Urease subunit gamma from Prochlorococcus marinus (strain MIT 9313).